Consider the following 290-residue polypeptide: Ankyrin repeat and SOCS box protein 9 (290 aa).

Met1 bears the N-acetylmethionine mark. Basic and acidic residues predominate over residues Met1–Arg11. A disordered region spans residues Met1–Phe20. 6 ANK repeats span residues Ser31–Ile60, Asp64–Gly93, Asp97–Pro126, Glu129–Tyr158, His162–Gln191, and Gly194–Ala223. The region spanning Pro236–Leu290 is the SOCS box domain.

It belongs to the ankyrin SOCS box (ASB) family. Substrate-recognition component of the ECS(ASB9) complex, composed of ASB9, CUL5, ELOB, ELOC and RNF7/RBX2.

The protein resides in the mitochondrion. It functions in the pathway protein modification; protein ubiquitination. Substrate-recognition component of a cullin-5-RING E3 ubiquitin-protein ligase complex (ECS complex, also named CRL5 complex), which mediates the ubiquitination and subsequent proteasomal degradation of target proteins. The ECS(ASB9) complex catalyzes ubiquitination of creatine kinases CKB and CKMT1A. This is Ankyrin repeat and SOCS box protein 9 from Mus musculus (Mouse).